The primary structure comprises 286 residues: Shikimate dehydrogenase (NADP(+)) (286 aa).

Shikimate is bound by residues 22-24 (SRS) and T71. Catalysis depends on K75, which acts as the Proton acceptor. E87 is a binding site for NADP(+). Shikimate contacts are provided by N96 and D111. NADP(+) contacts are provided by residues 136–140 (GAGGA), 160–165 (NRTVER), and I225. Y227 contributes to the shikimate binding site. G248 provides a ligand contact to NADP(+).

Belongs to the shikimate dehydrogenase family. Homodimer.

It catalyses the reaction shikimate + NADP(+) = 3-dehydroshikimate + NADPH + H(+). Its pathway is metabolic intermediate biosynthesis; chorismate biosynthesis; chorismate from D-erythrose 4-phosphate and phosphoenolpyruvate: step 4/7. Involved in the biosynthesis of the chorismate, which leads to the biosynthesis of aromatic amino acids. Catalyzes the reversible NADPH linked reduction of 3-dehydroshikimate (DHSA) to yield shikimate (SA). This chain is Shikimate dehydrogenase (NADP(+)), found in Rhizobium rhizogenes (strain K84 / ATCC BAA-868) (Agrobacterium radiobacter).